The primary structure comprises 183 residues: MENGAVYSPTTEEDPGPARGPRSGLAAYFFMGRLPLLRRVLKGLQLLLSLLAFICEEVVSQCTLCGGLYFFEFVSCSAFLLSLLILIVYCTPFYERVDTTKVKSSDFYITLGTGCVFLLASIIFVSTHDRTSAEIAAIVFGFIASFMFLLDFITMLYEKRQESQLRKPENTTRAEALTEPLNA.

At Met-1 the chain carries N-acetylmethionine. Residues Met-1–Arg-39 lie on the Cytoplasmic side of the membrane. Ser-8 carries the post-translational modification Phosphoserine. One can recognise an MARVEL domain in the interval Arg-33 to Arg-160. Residues Val-40 to Ser-60 form a helical membrane-spanning segment. Over Gln-61–Gly-67 the chain is Extracellular. A helical membrane pass occupies residues Leu-68–Val-88. Residues Tyr-89–Asp-106 lie on the Cytoplasmic side of the membrane. The chain crosses the membrane as a helical span at residues Phe-107–Thr-127. The Extracellular portion of the chain corresponds to His-128–Glu-134. A helical membrane pass occupies residues Ile-135–Met-155. Residues Leu-156 to Ala-183 lie on the Cytoplasmic side of the membrane. At Thr-171 the chain carries Phosphothreonine.

It belongs to the chemokine-like factor family. Interacts with PD-L1/CD274 (via transmembrane domain); the interaction is direct. Interacts with CMTM4. Interacts with CD58, ARG1, ENO1 and TMPO. As to expression, expressed in the leukocytes, placenta and testis.

It localises to the cell membrane. The protein localises to the early endosome membrane. Its subcellular location is the recycling endosome membrane. Its function is as follows. Master regulator of recycling and plasma membrane expression of PD-L1/CD274, an immune inhibitory ligand critical for immune tolerance to self and antitumor immunity. Associates with both constitutive and IFNG-induced PD-L1/CD274 at recycling endosomes, where it protects PD-L1/CD274 from being targeted for lysosomal degradation, likely by preventing its STUB1-mediated ubiquitination. May stabilize PD-L1/CD274 expression on antigen presenting cells and potentiates inhibitory signaling by PDCD1/CD279, its receptor on T-cells, ultimately triggering T-cell anergy. The polypeptide is CKLF-like MARVEL transmembrane domain-containing protein 6 (Homo sapiens (Human)).